The sequence spans 175 residues: MTDTEFGYVHGLAEDYLKYVLQIQQPGSKPSKTSRVLQDVASSVQDEVERTLKQCLDKFDVVSVDTARTIFNQVMEKEFEDGIVNWGRIVTIFAFEGILTKKLLGKCIASDMDMCKDISFFVAEFITENTGEWIKQNGGWENGFVKKFETKSGWLTFLEVTGKICETLCRLKQYY.

It belongs to the Bcl-2 family. In terms of assembly, interacts directly with BCL2L11/BIM, BAK1, BID, BMF and BBC3. Interacts directly with PMAIP1. Interacts with BOP. Interacts with ING4. Interacts with UBQLN4.

It localises to the cytoplasm. Its function is as follows. Retards apoptosis induced by IL-3 deprivation. May function in the response of hemopoietic cells to external signals and in maintaining endothelial survival during infection. Can inhibit apoptosis induced by serum starvation in the mammary epithelial cell line HC11. The polypeptide is Bcl-2-related protein A1 (BCL2A1) (Bos taurus (Bovine)).